A 186-amino-acid chain; its full sequence is MRRNGDGEEVVAKRRRRIKELVQVALRGGCLAASATAMAVMLTATEEGVADIYGFKLTLSSNWSFSPSYQYVVGACTGTVLYSLFQLCLGVYRLLTGSPITPSRFQAWLCFTSDQLFGYLMMSAGSAGSGVTNLNKTGIRHTPLPDFCKTLSSFCNHVALSLLLVFLSFIFLASSSFFTVLVLSTP.

At 1 to 23 the chain is on the cytoplasmic side; the sequence is MRRNGDGEEVVAKRRRRIKELVQ. A helical membrane pass occupies residues 24 to 44; it reads VALRGGCLAASATAMAVMLTA. Over 45 to 70 the chain is Extracellular; that stretch reads TEEGVADIYGFKLTLSSNWSFSPSYQ. N62 is a glycosylation site (N-linked (GlcNAc...) asparagine). Residues 71–91 form a helical membrane-spanning segment; that stretch reads YVVGACTGTVLYSLFQLCLGV. At 92 to 115 the chain is on the cytoplasmic side; the sequence is YRLLTGSPITPSRFQAWLCFTSDQ. Residues 116–132 traverse the membrane as a helical segment; sequence LFGYLMMSAGSAGSGVT. Topologically, residues 133–161 are extracellular; it reads NLNKTGIRHTPLPDFCKTLSSFCNHVALS. Residue N135 is glycosylated (N-linked (GlcNAc...) asparagine). A helical transmembrane segment spans residues 162–182; it reads LLLVFLSFIFLASSSFFTVLV. The Cytoplasmic segment spans residues 183–186; sequence LSTP.

Belongs to the Casparian strip membrane proteins (CASP) family. In terms of assembly, homodimer and heterodimers.

The protein localises to the cell membrane. The sequence is that of CASP-like protein ARALYDRAFT_316979 from Arabidopsis lyrata subsp. lyrata (Lyre-leaved rock-cress).